Consider the following 258-residue polypeptide: Leucine-rich repeat-containing protein 3B (258 aa).

An N-terminal signal peptide occupies residues 1-33 (MTPLDLWLSRSIPMCLLLQSLVLMVLCFPSAST). An LRRNT domain is found at 34–68 (CPKGCTCQRSESPPHGLNVTCSLSRLKEIPPDVPP). N51 is a glycosylation site (N-linked (GlcNAc...) asparagine). LRR repeat units lie at residues 69–90 (DTQLLQLDRNHISLVPDRIFHG), 93–114 (MLRRLNLSHNAVETLGEGAFIG), and 118–139 (SLEVLDLSYNRITSVHKDAFAR). N-linked (GlcNAc...) asparagine glycosylation is present at N98. An LRRCT domain is found at 149 to 196 (NPWHCDCALQQALGGMAHNHERVLCRSSELRDQEGQPFMAVDADLCNL). Residues 204 to 224 (AMLVTMFGWFAMVISYVVYYV) form a helical membrane-spanning segment.

The protein belongs to the LRRC3 family.

The protein localises to the membrane. The chain is Leucine-rich repeat-containing protein 3B (lrrc3b) from Danio rerio (Zebrafish).